The primary structure comprises 235 residues: MNTTPDTPTPRALRELTPLEARIVGVLVEKQHTVPDTYPLSLNALTAGCNQKTARAPVMSVSEDEVTTALDGLKHLSLVMEGSSSRVPRFEHNVNRVLGIPSQAIALLTILLLRGPQTAAELRLNSARLHGFADISSVEAFLDELAARAQPLVVRLPRAPGARENRWMHLMCGEVNLADFASADAGGADSVPPSEFEALKAEQKRLADEVARLNALVLRMASELGIDVDAQGDAS.

The protein belongs to the UPF0502 family.

This is UPF0502 protein Bcep18194_B0081 from Burkholderia lata (strain ATCC 17760 / DSM 23089 / LMG 22485 / NCIMB 9086 / R18194 / 383).